Reading from the N-terminus, the 158-residue chain is SsrA-binding protein (158 aa).

Residues 135-158 (DKRKTLKDRDWERDKQRGFKKDLD) form a disordered region. Basic and acidic residues predominate over residues 141 to 158 (KDRDWERDKQRGFKKDLD).

The protein belongs to the SmpB family.

The protein resides in the cytoplasm. In terms of biological role, required for rescue of stalled ribosomes mediated by trans-translation. Binds to transfer-messenger RNA (tmRNA), required for stable association of tmRNA with ribosomes. tmRNA and SmpB together mimic tRNA shape, replacing the anticodon stem-loop with SmpB. tmRNA is encoded by the ssrA gene; the 2 termini fold to resemble tRNA(Ala) and it encodes a 'tag peptide', a short internal open reading frame. During trans-translation Ala-aminoacylated tmRNA acts like a tRNA, entering the A-site of stalled ribosomes, displacing the stalled mRNA. The ribosome then switches to translate the ORF on the tmRNA; the nascent peptide is terminated with the 'tag peptide' encoded by the tmRNA and targeted for degradation. The ribosome is freed to recommence translation, which seems to be the essential function of trans-translation. The protein is SsrA-binding protein of Psychrobacter cryohalolentis (strain ATCC BAA-1226 / DSM 17306 / VKM B-2378 / K5).